We begin with the raw amino-acid sequence, 216 residues long: Thymidylate kinase (216 aa).

10 to 17 provides a ligand contact to ATP; sequence GPDGAGKS.

The protein belongs to the thymidylate kinase family.

The catalysed reaction is dTMP + ATP = dTDP + ADP. Functionally, phosphorylation of dTMP to form dTDP in both de novo and salvage pathways of dTTP synthesis. This is Thymidylate kinase from Lactobacillus acidophilus (strain ATCC 700396 / NCK56 / N2 / NCFM).